The following is an 85-amino-acid chain: High affinity immunoglobulin epsilon receptor subunit gamma (85 aa).

Residues 1 to 18 (MIPAVVLLLLLLVEQAAA) form the signal peptide. The Extracellular segment spans residues 19–23 (LGEPQ). Residues 24–44 (LCYILDAILFLYGIVLTLLYC) traverse the membrane as a helical segment. The Cytoplasmic portion of the chain corresponds to 45–85 (RLKLQVRKAATASEKSDGIYTGLSTRTQETYETLKHEKPPQ). Residues 53–81 (AATASEKSDGIYTGLSTRTQETYETLKHE) enclose the ITAM domain. Tyr-64 carries the phosphotyrosine modification. Ser-68 carries the phosphoserine modification. Tyr-75 carries the phosphotyrosine modification. Residue Thr-77 is modified to Phosphothreonine.

This sequence belongs to the CD3Z/FCER1G family. As to quaternary structure, igE Fc receptor is a tetramer of an alpha chain, a beta chain, and two disulfide linked gamma chains. Associates with FCGR1A; forms a functional signaling complex. The signaling subunit of immunoglobulin gamma (IgG) Fc receptor complex. As a homodimer or a heterodimer of CD247 and FCER1G, associates with the ligand binding subunit FCGR3A to form a functional receptor complex. Associates with CLEC6A. Interacts with CLEC4E. Interacts (via ITAM domain) with SYK (via SH2 domains); activates SYK, enabling integrin-mediated activation of neutrophils and macrophages. Interacts with CSF2RB and recruits SYK in response to IL3 stimulation; this interaction is direct. Interacts with CD300LH; the interaction may be indirect. Interacts with CD300LD. Interacts with TARM1.

The protein resides in the cell membrane. Adapter protein containing an immunoreceptor tyrosine-based activation motif (ITAM) that transduces activation signals from various immunoreceptors. As a component of the high-affinity immunoglobulin E (IgE) receptor, mediates allergic inflammatory signaling in mast cells. As a constitutive component of interleukin-3 receptor complex, selectively mediates interleukin 4/IL4 production by basophils priming T-cells toward effector T-helper 2 subset. Associates with pattern recognition receptors CLEC4D and CLEC4E to form a functional signaling complex in myeloid cells. Binding of mycobacterial trehalose 6,6'-dimycolate (TDM) to this receptor complex leads to phosphorylation of ITAM, triggering activation of SYK, CARD9 and NF-kappa-B, consequently driving maturation of antigen-presenting cells and shaping antigen-specific priming of T-cells toward effector T-helper 1 and T-helper 17 cell subtypes. May function cooperatively with other activating receptors. Functionally linked to integrin beta-2/ITGB2-mediated neutrophil activation. Also involved in integrin alpha-2/ITGA2-mediated platelet activation. The protein is High affinity immunoglobulin epsilon receptor subunit gamma (FCER1G) of Bos taurus (Bovine).